A 237-amino-acid chain; its full sequence is Phosphoribosylaminoimidazole-succinocarboxamide synthase (237 aa).

This sequence belongs to the SAICAR synthetase family.

It carries out the reaction 5-amino-1-(5-phospho-D-ribosyl)imidazole-4-carboxylate + L-aspartate + ATP = (2S)-2-[5-amino-1-(5-phospho-beta-D-ribosyl)imidazole-4-carboxamido]succinate + ADP + phosphate + 2 H(+). The protein operates within purine metabolism; IMP biosynthesis via de novo pathway; 5-amino-1-(5-phospho-D-ribosyl)imidazole-4-carboxamide from 5-amino-1-(5-phospho-D-ribosyl)imidazole-4-carboxylate: step 1/2. This Psychrobacter cryohalolentis (strain ATCC BAA-1226 / DSM 17306 / VKM B-2378 / K5) protein is Phosphoribosylaminoimidazole-succinocarboxamide synthase.